Reading from the N-terminus, the 543-residue chain is EH domain-containing protein 2 (543 aa).

Residue serine 3 is modified to Phosphoserine. Residues 55 to 286 (FDGKPMVLVA…DLFRDIQGLP (232 aa)) enclose the Dynamin-type G domain. The segment at 65-72 (GQYSTGKT) is G1 motif. 65-72 (GQYSTGKT) lines the ATP pocket. A G2 motif region spans residues 91-92 (EP). A KPF loop; caveolar targeting motif is present at residues 120 to 122 (KPF). The interval 153–156 (DTPG) is G3 motif. The G4 motif stretch occupies residues 219 to 222 (NKAD). Lysine 220 is an ATP binding site. A region of interest (G5 motif) is located at residue valine 243. Residue tryptophan 258 participates in ATP binding. The tract at residues 320–340 (SVFGKENKKKQLILKLPVIFA) is mediates membrane-binding. A phosphoserine mark is found at serine 438, serine 468, serine 470, serine 484, and serine 493. The region spanning 449–537 (DKSKYDEIFY…RRLVPPSKRR (89 aa)) is the EH domain. An EF-hand domain is found at 481-516 (LPNSVLGRIWKLSDVDRDGMLDDEEFALASHLIEAK). Residues aspartate 494, aspartate 496, aspartate 498, methionine 500, and glutamate 505 each contribute to the Ca(2+) site. Residues 523 to 543 (PANLPRRLVPPSKRRHKGSAE) are disordered. Over residues 534 to 543 (SKRRHKGSAE) the composition is skewed to basic residues.

This sequence belongs to the TRAFAC class dynamin-like GTPase superfamily. Dynamin/Fzo/YdjA family. EHD subfamily. As to quaternary structure, homodimer and homooligomer. Interacts with EHD1. May also interact with EHD3 and EHD4. Interacts with MYOF. Interacts with EHBP1. Interacts with FER1L5 (via second C2 domain). Interacts with CAV1 in a cholesterol-dependent manner. Interacts (via EH domain) with PACSIN2 (via NPF motifs); this interaction probably stabilizes the caveolae. In terms of tissue distribution, highly expressed in heart and moderately expressed in placenta, lung, and skeletal muscle.

Its subcellular location is the cell membrane. The protein localises to the membrane. It localises to the caveola. The protein resides in the endosome membrane. It is found in the cytoplasm. Its subcellular location is the cytosol. With respect to regulation, the very low intrinsic ATPase activity is increased upon interaction with liposomes. In terms of biological role, ATP- and membrane-binding protein that controls membrane reorganization/tubulation upon ATP hydrolysis. Plays a role in membrane trafficking between the plasma membrane and endosomes. Important for the internalization of GLUT4. Required for fusion of myoblasts to skeletal muscle myotubes. Required for normal translocation of FER1L5 to the plasma membrane. Regulates the equilibrium between cell surface-associated and cell surface-dissociated caveolae by constraining caveolae at the cell membrane. The chain is EH domain-containing protein 2 from Homo sapiens (Human).